The sequence spans 89 residues: Small ribosomal subunit protein uS15 (89 aa).

The protein belongs to the universal ribosomal protein uS15 family. As to quaternary structure, part of the 30S ribosomal subunit. Forms a bridge to the 50S subunit in the 70S ribosome, contacting the 23S rRNA.

Functionally, one of the primary rRNA binding proteins, it binds directly to 16S rRNA where it helps nucleate assembly of the platform of the 30S subunit by binding and bridging several RNA helices of the 16S rRNA. Its function is as follows. Forms an intersubunit bridge (bridge B4) with the 23S rRNA of the 50S subunit in the ribosome. In Pseudomonas entomophila (strain L48), this protein is Small ribosomal subunit protein uS15.